A 482-amino-acid chain; its full sequence is Protein translocase subunit SecY (482 aa).

The tract at residues 1 to 22 (MVIKKPANKVDKKSTFKSSNKK) is disordered. Transmembrane regions (helical) follow at residues 41–61 (ILFTLLALIIIRLGVYITVPG), 92–112 (FSILALGVSPYITASIIVQLL), 137–157 (LTKIIMIPFALMQAEATIFTL), 177–197 (AFYYILIPLVMLGGSFFMLWI), 201–221 (ITIKGIGNGISIVIFIGIIIS), 243–263 (IFFSGLLNFMIYISVFLLVIL), 303–323 (VIPVIFASAIISTPITISQII), 342–362 (FNTWWGISIFGILIVLFTFLY), 405–425 (VVGSVFLAIIALLPYVISKLT), and 426–446 (QLPSNLAIGGTGLIICISVAI).

The protein belongs to the SecY/SEC61-alpha family. Component of the Sec protein translocase complex. Heterotrimer consisting of SecY, SecE and SecG subunits. The heterotrimers can form oligomers, although 1 heterotrimer is thought to be able to translocate proteins. Interacts with the ribosome. Interacts with SecDF, and other proteins may be involved. Interacts with SecA.

It localises to the cell membrane. Its function is as follows. The central subunit of the protein translocation channel SecYEG. Consists of two halves formed by TMs 1-5 and 6-10. These two domains form a lateral gate at the front which open onto the bilayer between TMs 2 and 7, and are clamped together by SecE at the back. The channel is closed by both a pore ring composed of hydrophobic SecY resides and a short helix (helix 2A) on the extracellular side of the membrane which forms a plug. The plug probably moves laterally to allow the channel to open. The ring and the pore may move independently. The protein is Protein translocase subunit SecY of Mycoplasma capricolum subsp. capricolum (strain California kid / ATCC 27343 / NCTC 10154).